The primary structure comprises 544 residues: NADP-dependent malic enzyme (544 aa).

The segment at 1–22 (MQNKPSFILRNPSANKGTGFNN) is disordered. Residues 12–21 (PSANKGTGFN) show a composition bias toward polar residues. Tyr92 acts as the Proton donor in catalysis. Arg145 serves as a coordination point for NAD(+). The active-site Proton acceptor is the Lys163. Positions 234, 235, and 258 each coordinate a divalent metal cation. Asp258 lines the NAD(+) pocket. An NADP(+)-binding site is contributed by 287–303 (VFLGAGSAGIGVADCIM). Asn400 lines the NAD(+) pocket.

It belongs to the malic enzymes family. As to quaternary structure, homotetramer. It depends on Mg(2+) as a cofactor. Mn(2+) serves as cofactor. Expressed in the fruiting body.

The protein resides in the cytoplasm. The enzyme catalyses (S)-malate + NADP(+) = pyruvate + CO2 + NADPH. It carries out the reaction oxaloacetate + H(+) = pyruvate + CO2. This Dictyostelium discoideum (Social amoeba) protein is NADP-dependent malic enzyme (malA).